The primary structure comprises 227 residues: Cytidylate kinase (227 aa).

11–19 lines the ATP pocket; sequence GPSGAGKGT.

Belongs to the cytidylate kinase family. Type 1 subfamily.

The protein localises to the cytoplasm. It carries out the reaction CMP + ATP = CDP + ADP. It catalyses the reaction dCMP + ATP = dCDP + ADP. This chain is Cytidylate kinase, found in Pasteurella multocida (strain Pm70).